The primary structure comprises 344 residues: Heat-inducible transcription repressor HrcA (344 aa).

It belongs to the HrcA family.

In terms of biological role, negative regulator of class I heat shock genes (grpE-dnaK-dnaJ and groELS operons). Prevents heat-shock induction of these operons. This Streptococcus equi subsp. equi (strain 4047) protein is Heat-inducible transcription repressor HrcA.